We begin with the raw amino-acid sequence, 163 residues long: Small heat shock protein C1 (163 aa).

In terms of domain architecture, sHSP spans 55–163 (TFYESSSLKS…EQDSREITIN (109 aa)).

This sequence belongs to the small heat shock protein (HSP20) family.

This chain is Small heat shock protein C1 (hspC1), found in Rickettsia prowazekii (strain Madrid E).